The sequence spans 223 residues: Large ribosomal subunit protein bL25 (223 aa).

The interval 198–223 (EEIGDRPRSAEEGAAPVKERKLRESE) is disordered.

Belongs to the bacterial ribosomal protein bL25 family. CTC subfamily. In terms of assembly, part of the 50S ribosomal subunit; part of the 5S rRNA/L5/L18/L25 subcomplex. Contacts the 5S rRNA. Binds to the 5S rRNA independently of L5 and L18.

This is one of the proteins that binds to the 5S RNA in the ribosome where it forms part of the central protuberance. This Thermomicrobium roseum (strain ATCC 27502 / DSM 5159 / P-2) protein is Large ribosomal subunit protein bL25.